A 214-amino-acid polypeptide reads, in one-letter code: GTP-binding nuclear protein GSP1/Ran (214 aa).

The region spanning 4 to 168 (EVPTFKLVLV…LWLARKLAGN (165 aa)) is the Small GTPase Ran-type domain. GTP is bound at residue 15-22 (DGGTGKTT). Residues 34 to 42 (KKYIATIGV) are switch-I. Residues G65, 119-122 (NKVD), and 147-149 (SAK) contribute to the GTP site. The segment at 65-81 (GQEKFGGLRDGYYINAQ) is switch-II.

Belongs to the small GTPase superfamily. Ran family. In terms of assembly, found in a nuclear export complex with RanGTP, exportin and pre-miRNA.

The protein localises to the nucleus. Functionally, GTP-binding protein involved in nucleocytoplasmic transport. Required for the import of protein into the nucleus and also for RNA export. Involved in chromatin condensation and control of cell cycle. The chain is GTP-binding nuclear protein GSP1/Ran (GSP1) from Eremothecium gossypii (strain ATCC 10895 / CBS 109.51 / FGSC 9923 / NRRL Y-1056) (Yeast).